Here is a 349-residue protein sequence, read N- to C-terminus: 3-isopropylmalate dehydrogenase (349 aa).

Substrate-binding residues include arginine 91, arginine 101, arginine 129, and aspartate 219. Mg(2+)-binding residues include aspartate 219, aspartate 243, and aspartate 247. 277–289 lines the NAD(+) pocket; sequence GSAPDIAGLGKAN.

Belongs to the isocitrate and isopropylmalate dehydrogenases family. LeuB type 1 subfamily. As to quaternary structure, homodimer. The cofactor is Mg(2+). It depends on Mn(2+) as a cofactor.

The protein localises to the cytoplasm. It catalyses the reaction (2R,3S)-3-isopropylmalate + NAD(+) = 4-methyl-2-oxopentanoate + CO2 + NADH. It participates in amino-acid biosynthesis; L-leucine biosynthesis; L-leucine from 3-methyl-2-oxobutanoate: step 3/4. Catalyzes the oxidation of 3-carboxy-2-hydroxy-4-methylpentanoate (3-isopropylmalate) to 3-carboxy-4-methyl-2-oxopentanoate. The product decarboxylates to 4-methyl-2 oxopentanoate. This is 3-isopropylmalate dehydrogenase from Zymomonas mobilis subsp. mobilis (strain ATCC 31821 / ZM4 / CP4).